Reading from the N-terminus, the 420-residue chain is Serine hydroxymethyltransferase (420 aa).

(6S)-5,6,7,8-tetrahydrofolate-binding positions include L121 and 125 to 127 (GHL). Residue K230 is modified to N6-(pyridoxal phosphate)lysine. (6S)-5,6,7,8-tetrahydrofolate contacts are provided by residues E246 and 354–356 (SPF).

Belongs to the SHMT family. Homodimer. Requires pyridoxal 5'-phosphate as cofactor.

The protein resides in the cytoplasm. The catalysed reaction is (6R)-5,10-methylene-5,6,7,8-tetrahydrofolate + glycine + H2O = (6S)-5,6,7,8-tetrahydrofolate + L-serine. Its pathway is one-carbon metabolism; tetrahydrofolate interconversion. It participates in amino-acid biosynthesis; glycine biosynthesis; glycine from L-serine: step 1/1. Functionally, catalyzes the reversible interconversion of serine and glycine with tetrahydrofolate (THF) serving as the one-carbon carrier. This reaction serves as the major source of one-carbon groups required for the biosynthesis of purines, thymidylate, methionine, and other important biomolecules. Also exhibits THF-independent aldolase activity toward beta-hydroxyamino acids, producing glycine and aldehydes, via a retro-aldol mechanism. This chain is Serine hydroxymethyltransferase, found in Rickettsia prowazekii (strain Madrid E).